The following is a 263-amino-acid chain: MPEGPEIRRAADNLEAAIKGKPLTDVWFAFPQLKTYQSQLIGQHVTHVGTRGKALLTHFSNDLTLYSHNQLYGVWRVVDTGEEPQTTRVLRVKLQTADKTILLYSASDIEMLRPEQLTTHPFLQRVGPDVLDPNLTPEVVKERLLSPRFRNRQFAGLLLDQAFLAGLGNYLRVEILWQVGLTGNHKAKDLNAAQLDALAHALLEIPRFSYATRGQVDENKHHGALFRFKVFHRDGELCERCGGIIEKTTLSSRPFYWCPGCQH.

Pro2 functions as the Schiff-base intermediate with DNA in the catalytic mechanism. Catalysis depends on Glu3, which acts as the Proton donor. The Proton donor; for beta-elimination activity role is filled by Lys53. DNA is bound by residues Gln70, Arg125, and Asn169. The segment at 229-263 (KVFHRDGELCERCGGIIEKTTLSSRPFYWCPGCQH) adopts an FPG-type zinc-finger fold. Arg253 acts as the Proton donor; for delta-elimination activity in catalysis.

It belongs to the FPG family. Zn(2+) is required as a cofactor.

The catalysed reaction is 2'-deoxyribonucleotide-(2'-deoxyribose 5'-phosphate)-2'-deoxyribonucleotide-DNA = a 3'-end 2'-deoxyribonucleotide-(2,3-dehydro-2,3-deoxyribose 5'-phosphate)-DNA + a 5'-end 5'-phospho-2'-deoxyribonucleoside-DNA + H(+). In terms of biological role, involved in base excision repair of DNA damaged by oxidation or by mutagenic agents. Acts as a DNA glycosylase that recognizes and removes damaged bases. Has a preference for oxidized pyrimidines, such as thymine glycol, 5,6-dihydrouracil and 5,6-dihydrothymine. Has AP (apurinic/apyrimidinic) lyase activity and introduces nicks in the DNA strand. Cleaves the DNA backbone by beta-delta elimination to generate a single-strand break at the site of the removed base with both 3'- and 5'-phosphates. In Shigella boydii serotype 4 (strain Sb227), this protein is Endonuclease 8.